We begin with the raw amino-acid sequence, 873 residues long: Leucine--tRNA ligase (873 aa).

Residues 42-52 (PYPSGKLHMGH) carry the 'HIGH' region motif. A disordered region spans residues 624–643 (PVEIGGTEKMSKSKNNGVDP). Residues 632-636 (KMSKS) carry the 'KMSKS' region motif. Lys-635 lines the ATP pocket.

This sequence belongs to the class-I aminoacyl-tRNA synthetase family.

The protein localises to the cytoplasm. The enzyme catalyses tRNA(Leu) + L-leucine + ATP = L-leucyl-tRNA(Leu) + AMP + diphosphate. In Pseudomonas aeruginosa (strain ATCC 15692 / DSM 22644 / CIP 104116 / JCM 14847 / LMG 12228 / 1C / PRS 101 / PAO1), this protein is Leucine--tRNA ligase.